The sequence spans 819 residues: Leucine--tRNA ligase (819 aa).

Residues 40–51 carry the 'HIGH' region motif; it reads PYPSGAGLHVGH. A 'KMSKS' region motif is present at residues 600-604; the sequence is KMSKS. An ATP-binding site is contributed by K603.

Belongs to the class-I aminoacyl-tRNA synthetase family.

The protein localises to the cytoplasm. It carries out the reaction tRNA(Leu) + L-leucine + ATP = L-leucyl-tRNA(Leu) + AMP + diphosphate. The polypeptide is Leucine--tRNA ligase (Chlamydia trachomatis serovar A (strain ATCC VR-571B / DSM 19440 / HAR-13)).